The primary structure comprises 142 residues: Putative pre-16S rRNA nuclease (142 aa).

This sequence belongs to the YqgF nuclease family.

It is found in the cytoplasm. Functionally, could be a nuclease involved in processing of the 5'-end of pre-16S rRNA. In Malacoplasma penetrans (strain HF-2) (Mycoplasma penetrans), this protein is Putative pre-16S rRNA nuclease.